Here is a 979-residue protein sequence, read N- to C-terminus: Receptor-type tyrosine-protein phosphatase-like N (979 aa).

The first 34 residues, 1 to 34 (MRLPGRPGGPGGSGGLRVLLCLLLLGSRPGGCNA), serve as a signal peptide directing secretion. The interval 35–131 (ISAHGCLFDR…HPRDRSGLVP (97 aa)) is RESP18 homology domain. Topologically, residues 35-575 (ISAHGCLFDR…RPAHSTSPMR (541 aa)) are lumenal. Cys-53 and Cys-62 form a disulfide bridge. Residues 113-127 (IPRLRPPEPHPRDRS) show a composition bias toward basic and acidic residues. Disordered regions lie at residues 113 to 171 (IPRL…GAGS), 248 to 272 (GSKG…PAQL), 285 to 332 (SQVP…EQPD), and 391 to 466 (EQVQ…STRP). Ser-308 and Ser-309 each carry phosphoserine. Residues 400–409 (EPPPPMPSLP) are compositionally biased toward pro residues. Positions 449 to 575 (SPLGQNQPTM…RPAHSTSPMR (127 aa)) are sufficient for dimerization of proICA512. Over residues 451-466 (LGQNQPTMAGQPSTRP) the composition is skewed to polar residues. N-linked (GlcNAc...) asparagine glycosylation is found at Asn-506 and Asn-524. A helical membrane pass occupies residues 576–600 (SVLLTLVALAGVAGLLVALAVALCV). The tract at residues 601-732 (RQHARQRDKE…PNTCATAQGE (132 aa)) is sufficient for dimerization of proICA512. Residues 601–979 (RQHARQRDKE…VNAILKALPQ (379 aa)) lie on the Cytoplasmic side of the membrane. Positions 643–680 (NRAEGPPEPSRVSSVSSQFSDAAQASPSSHSSTPSWCE) are disordered. Residues 652-677 (SRVSSVSSQFSDAAQASPSSHSSTPS) are compositionally biased toward low complexity. Residues 709–969 (LAKEWQALCA…EFALTAVAEE (261 aa)) form the Tyrosine-protein phosphatase domain. A Glycyl lysine isopeptide (Lys-Gly) (interchain with G-Cter in SUMO) cross-link involves residue Lys-754.

It belongs to the protein-tyrosine phosphatase family. Receptor class 8 subfamily. Homodimer; shown for the unprocessed protein (proICA512) in the endoplasmic reticulum and resolved during protein maturation as ICA512-TMF seems to be predominantly monomeric in secretory granules; however, ICA512-CCF interacts with ICA512-TMF disrupting the ICA512-TMF:SNTB2 complex. The isolated lumenal RESP18 homology domain has been shown to form disulfide-linked homooligomers. Interacts (via cytoplasmic domain) with phosphorylated SNTB2; this protects PTPRN against cleavage by CAPN1 to produce ICA512-CCF. Dephosphorylation of SNTB2 upon insulin stimulation disrupts the interaction and results in PTPRN cleavage. Interacts with SNX19. ICA512-CCF interacts with PIAS4; in the nucleus. Interacts with STAT5B (phosphorylated); down-regulated by ICA512-CCF sumoylation; ICA512-CCF prevents STAT5B dephosphorylation; ICA512-CCF mediates interaction of STAT5B with PIAS4. Interacts (via RESP18 homology domain) with insulin and proinsulin. Interacts with PTPRN2, PTPRA and PTPRE. Post-translationally, N-glycosylated. O-glycosylated. In terms of processing, subject to proteolytic cleavage at multiple sites. Subject to cleavage on a pair of basic residues. On exocytosis of secretory granules in pancreatic beta-cells ICA512-TMF is transiently inserted in the plasma-membrane and cleaved by mu-type calpain CPN1 to yield ICA512-CCF. Post-translationally, sumoylated at two sites including Lys-754. Sumoylation decreases interaction with STAT5. Detected in pituitary (at protein level).

The protein resides in the membrane. Its subcellular location is the cytoplasmic vesicle. It is found in the secretory vesicle membrane. The protein localises to the perikaryon. It localises to the cell projection. The protein resides in the axon. Its subcellular location is the synapse. It is found in the cell membrane. The protein localises to the endosome. It localises to the nucleus. Functionally, plays a role in vesicle-mediated secretory processes. Required for normal accumulation of secretory vesicles in hippocampus, pituitary and pancreatic islets. Required for the accumulation of normal levels of insulin-containing vesicles and preventing their degradation. Plays a role in insulin secretion in response to glucose stimuli. Required for normal accumulation of the neurotransmitters norepinephrine, dopamine and serotonin in the brain. In females, but not in males, required for normal accumulation and secretion of pituitary hormones, such as luteinizing hormone (LH) and follicle-stimulating hormone (FSH). Required to maintain normal levels of renin expression and renin release. Seems to lack intrinsic enzyme activity. May regulate catalytic active protein-tyrosine phosphatases such as PTPRA through dimerization. In terms of biological role, ICA512-TMF regulates dynamics and exocytosis of insulin secretory granules (SGs); binding of ICA512-TMF to SNTB2/beta-2-syntrophin is proposed to restrain SGs mobility and exocytosis by tethering them to the actin cytoskeleton depending on UTRN; the function is inhibited by cytoplasmic ICA512-CFF dimerizing with ICA512-TMF and displacing SNTB2. Its function is as follows. ICA512-CCF translocated to the nucleus promotes expression of insulin and other granule-related genes; the function implicates binding to and regulating activity of STAT5B probably by preventing its dephosphorylation and potentially by inducing its sumoylation by recruiting PIAS4. Enhances pancreatic beta-cell proliferation by converging with signaling by STAT5B and STAT3. ICA512-CCF located in the cytoplasm regulates dynamics and exocytosis of insulin secretory granules (SGs) by dimerizing with ICA512-TMF and displacing SNTB2 thus enhancing SGs mobility and exocytosis. This chain is Receptor-type tyrosine-protein phosphatase-like N (PTPRN), found in Bos taurus (Bovine).